The sequence spans 338 residues: UDP-glucose 4-epimerase (338 aa).

NAD(+) is bound by residues 11–12 (YI), 31–36 (DNLCNS), 58–59 (DI), 80–84 (FAGLK), asparagine 99, serine 124, tyrosine 149, lysine 153, and phenylalanine 178. 2 residues coordinate substrate: serine 124 and tyrosine 149. Tyrosine 149 acts as the Proton acceptor in catalysis. Substrate is bound by residues asparagine 179, 199–200 (NL), 216–218 (AVF), arginine 231, 292–295 (RDGD), and tyrosine 299.

This sequence belongs to the NAD(P)-dependent epimerase/dehydratase family. Homodimer. NAD(+) is required as a cofactor.

The enzyme catalyses UDP-alpha-D-glucose = UDP-alpha-D-galactose. Its pathway is carbohydrate metabolism; galactose metabolism. Its function is as follows. Involved in the metabolism of galactose. Catalyzes the conversion of UDP-galactose (UDP-Gal) to UDP-glucose (UDP-Glc) through a mechanism involving the transient reduction of NAD. The polypeptide is UDP-glucose 4-epimerase (galE) (Salmonella typhi).